A 1250-amino-acid chain; its full sequence is MWLSPEEVLVANALWVTERANPFFVLQRRRGHGRGGGLTGLLVGTLDVVLDSSARVAPYRILHQTQDSQVYWTVACGSSRKEITKHWEWLENNLLQTLSIFDSEEDITTFVKGKIHGIIAEENKNLQPQGDEDPGKFKEAELKMRKQFGMPEGEKLVNYYSCSYWKGRVPRQGWLYLTVNHLCFYSFLLGKEVSLVVQWVDITRLEKNATLLFPESIRVDTRDQELFFSMFLNIGETFKLMEQLANLAMRQLLDSEGFLEDKALPRPIRPHRNISALKRDLDARAKNECYRATFRLPRDERLDGHTSCTLWTPFNKLHIPGQMFISNNYICFASKEEDACHLIIPLREVTIVEKADSSSVLPSPLSISTKSKMTFLFANLKDRDFLVQRISDFLQKTPSKQPGSIGSRKASVVDPSTESSPAPQEGSEQPASPASPLSSRQSFCAQEAPTASQGLLKLFQKNSPMEDLGAKGAKEKMKEESWHIHFFEYGRGVCMYRTAKTRALVLKGIPESLRGELWLLFSGAWNEMVTHPGYYAELVEKSTGKYSLATEEIERDLHRSMPEHPAFQNELGIAALRRVLTAYAFRNPTIGYCQAMNIVTSVLLLYGSEEEAFWLLVALCERMLPDYYNTRVVGALVDQGIFEELTRDFLPQLSEKMQDLGVISSISLSWFLTLFLSVMPFESAVVIVDCFFYEGIKVILQVALAVLDANMEQLLGCSDEGEAMTMLGRYLDNVVNKQSVSPPIPHLRALLSSSDDPPAEVDIFELLKVSYEKFSSLRAEDIEQMRFKQRLKVIQSLEDTAKRSVVRAIPVDIGFSIEELEDLYMVFKAKHLASQYWGCSRTMAGRRDPSLPYLEQYRIDASQFRELFASLTPWACGSHTPLLAGRMFRLLDENKDSLINFKEFVTGMSGMYHGDLTEKLKVLYKLHLPPALSPEEAESALEAAHYFTEDSSSEASPLASDLDLFLPWEAQEALPQEEQEGSGSEERGEEKGTSSPDYRHYLRMWAKEKEAQKETIKDLPKMNQEQFIELCKTLYNMFSEDPMEQDLYHAIATVASLLLRIGEVGKKFSARTGRKPRDCATEEDEPPAPELHQDAARELQPPAAGDPQAKAGGDTHLGKAPQESQVVVEGGSGEGQGSPSQLLSDDETKDDMSMSSYSVVSTGSLQCEDLADDTVLVGGEACSPTARIGGTVDTDWCISFEQILASILTESVLVNFFEKRVDIGLKIKDQKKVERQFSTASDHEQPGVSG.

2 consecutive GRAM domains span residues Leu-142–Ala-209 and Glu-288–Asp-356. Thr-397 carries the phosphothreonine modification. The tract at residues Thr-397–Phe-443 is disordered. Ser-411, Ser-432, Ser-435, and Ser-463 each carry phosphoserine. Over residues Asp-414–Phe-443 the composition is skewed to polar residues. Positions Gly-508 to Gly-695 constitute a Rab-GAP TBC domain. Residues Leu-668 to Val-688 traverse the membrane as a helical segment. Positions His-879 to Gly-914 constitute an EF-hand domain. Disordered stretches follow at residues Leu-974–Arg-999, Ser-1069–Gln-1093, and Val-1128–Tyr-1157. The span at Ser-984–Arg-999 shows a compositional bias: basic and acidic residues. Phosphoserine is present on Ser-1241.

It is found in the membrane. In terms of biological role, may act as a GTPase-activating protein for Rab family protein(s). This chain is TBC1 domain family member 9B (TBC1D9B), found in Homo sapiens (Human).